Here is a 289-residue protein sequence, read N- to C-terminus: 33 kDa chaperonin (289 aa).

2 disulfides stabilise this stretch: cysteine 229–cysteine 231 and cysteine 262–cysteine 265.

Belongs to the HSP33 family. Under oxidizing conditions two disulfide bonds are formed involving the reactive cysteines. Under reducing conditions zinc is bound to the reactive cysteines and the protein is inactive.

The protein resides in the cytoplasm. In terms of biological role, redox regulated molecular chaperone. Protects both thermally unfolding and oxidatively damaged proteins from irreversible aggregation. Plays an important role in the bacterial defense system toward oxidative stress. This chain is 33 kDa chaperonin, found in Pectobacterium atrosepticum (strain SCRI 1043 / ATCC BAA-672) (Erwinia carotovora subsp. atroseptica).